Consider the following 1033-residue polypeptide: Phospholipid-transporting ATPase neo1 (1033 aa).

Transmembrane regions (helical) follow at residues 133–153, 274–294, 317–337, and 344–364; these read LKIG…LITL, TLWA…VYTG, INFY…GLTF, and DWYI…PINL. Residue Asp-408 is the 4-aspartylphosphate intermediate of the active site. 15 residues coordinate ATP: Asp-408, Lys-409, Thr-410, Glu-491, Phe-528, Ser-530, Lys-533, Lys-551, Arg-580, Thr-581, Thr-662, Gly-663, Asp-664, Arg-744, and Lys-750. Position 408 (Asp-408) interacts with Mg(2+). Thr-410 contacts Mg(2+). Transmembrane regions (helical) follow at residues 768–788, 843–863, 913–933, 939–959, 965–985, and 992–1012; these read IGDG…IGIV, VVYS…LLLV, VLIS…LIGF, MLAV…ALQI, TIVM…PFLT, and FLLG…SLLP. Asp-770 contributes to the Mg(2+) binding site. Positions 773 and 774 each coordinate ATP. A Mg(2+)-binding site is contributed by Asp-774.

The protein belongs to the cation transport ATPase (P-type) (TC 3.A.3) family. Type IV subfamily. Functions without a CDC50/LEM3 family accessory subunit. It depends on Mg(2+) as a cofactor.

The protein resides in the endosome membrane. Its subcellular location is the golgi apparatus membrane. It carries out the reaction ATP + H2O + phospholipidSide 1 = ADP + phosphate + phospholipidSide 2.. The catalysed reaction is a 1,2-diacyl-sn-glycero-3-phospho-L-serine(out) + ATP + H2O = a 1,2-diacyl-sn-glycero-3-phospho-L-serine(in) + ADP + phosphate + H(+). The enzyme catalyses a 1,2-diacyl-sn-glycero-3-phosphoethanolamine(out) + ATP + H2O = a 1,2-diacyl-sn-glycero-3-phosphoethanolamine(in) + ADP + phosphate + H(+). In terms of biological role, flippase that catalyzes the hydrolysis of ATP coupled to the transport of lysophosphatidylserine, phosphatidylethanolamine, and phosphatidylserine from the lumenal to the cytosolic leaflet of the Golgi apparatus membrane and ensures the maintenance of asymmetric distribution of phospholipids. In Schizosaccharomyces pombe (strain 972 / ATCC 24843) (Fission yeast), this protein is Phospholipid-transporting ATPase neo1.